We begin with the raw amino-acid sequence, 332 residues long: MSVKELLIQNVHKEEHSHAHNKITVVGVGAVGMACAISILMKDLADELALVDVIEDKLRGEMLDLQHGSLFLRTPKIVSGKDYSVTAHSKLVIITAGARQQEGESRLNLVQRNVNIFKFIIPNVVKHSPDCTLLVVSNPVDILTYVAWKISGFPKHRVIGSGCNLDSARFRYLMGGKLGIHSLSCHGWIIGEHGDSSVPVWSGVNVAGVSLKALYPDLGTDADKEHWKEVHKQVVDSAYEVIKLKGYTSWAIGLSVADLAETIMRNLRRVHPISTMVKGMYGIHDDVFLSVPCVLGYSGITDVVKMTLKSEEEEKLRKSADTLWGIQKELQF.

NAD(+) is bound by residues 29-57 (GAVG…IEDK) and R99. Substrate contacts are provided by R106, N138, and R169. N138 provides a ligand contact to NAD(+). The Proton acceptor role is filled by H193. Substrate is bound at residue T248.

The protein belongs to the LDH/MDH superfamily. LDH family. In terms of assembly, homotetramer.

The protein resides in the cytoplasm. It carries out the reaction (S)-lactate + NAD(+) = pyruvate + NADH + H(+). The protein operates within fermentation; pyruvate fermentation to lactate; (S)-lactate from pyruvate: step 1/1. Its function is as follows. Interconverts simultaneously and stereospecifically pyruvate and lactate with concomitant interconversion of NADH and NAD(+). The protein is L-lactate dehydrogenase A chain (LDHA) of Trachemys scripta elegans (Red-eared slider turtle).